We begin with the raw amino-acid sequence, 211 residues long: tRNA (guanine-N(7)-)-methyltransferase (211 aa).

The S-adenosyl-L-methionine site is built by Glu44, Asp69, Asp96, and Asp118. Residue Asp118 is part of the active site. Substrate is bound at residue Lys122. Residues 124–129 form an interaction with RNA region; that stretch reads KHEKRR. Residues Asp154 and 191 to 194 each bind substrate; that span reads TEYE.

This sequence belongs to the class I-like SAM-binding methyltransferase superfamily. TrmB family.

It carries out the reaction guanosine(46) in tRNA + S-adenosyl-L-methionine = N(7)-methylguanosine(46) in tRNA + S-adenosyl-L-homocysteine. Its pathway is tRNA modification; N(7)-methylguanine-tRNA biosynthesis. Functionally, catalyzes the formation of N(7)-methylguanine at position 46 (m7G46) in tRNA. This is tRNA (guanine-N(7)-)-methyltransferase from Streptococcus pyogenes serotype M12 (strain MGAS2096).